We begin with the raw amino-acid sequence, 126 residues long: Aspartate 1-decarboxylase (126 aa).

The Schiff-base intermediate with substrate; via pyruvic acid role is filled by S25. S25 carries the pyruvic acid (Ser) modification. Residue T57 coordinates substrate. The Proton donor role is filled by Y58. Residue 73–75 participates in substrate binding; the sequence is GGA.

This sequence belongs to the PanD family. As to quaternary structure, heterooctamer of four alpha and four beta subunits. It depends on pyruvate as a cofactor. Post-translationally, is synthesized initially as an inactive proenzyme, which is activated by self-cleavage at a specific serine bond to produce a beta-subunit with a hydroxyl group at its C-terminus and an alpha-subunit with a pyruvoyl group at its N-terminus.

The protein resides in the cytoplasm. The catalysed reaction is L-aspartate + H(+) = beta-alanine + CO2. Its pathway is cofactor biosynthesis; (R)-pantothenate biosynthesis; beta-alanine from L-aspartate: step 1/1. Functionally, catalyzes the pyruvoyl-dependent decarboxylation of aspartate to produce beta-alanine. This Xylella fastidiosa (strain Temecula1 / ATCC 700964) protein is Aspartate 1-decarboxylase.